Consider the following 155-residue polypeptide: 3-hydroxyacyl-[acyl-carrier-protein] dehydratase FabZ (155 aa).

H58 is an active-site residue.

The protein belongs to the thioester dehydratase family. FabZ subfamily.

It localises to the cytoplasm. The enzyme catalyses a (3R)-hydroxyacyl-[ACP] = a (2E)-enoyl-[ACP] + H2O. In terms of biological role, involved in unsaturated fatty acids biosynthesis. Catalyzes the dehydration of short chain beta-hydroxyacyl-ACPs and long chain saturated and unsaturated beta-hydroxyacyl-ACPs. The polypeptide is 3-hydroxyacyl-[acyl-carrier-protein] dehydratase FabZ (Rhizobium etli (strain CIAT 652)).